The following is a 201-amino-acid chain: Eukaryotic translation initiation factor 4E-5 (201 aa).

The cysteines at positions 122 and 126 are disulfide-linked.

Belongs to the eukaryotic initiation factor 4E family. In terms of assembly, eIF4F is a multi-subunit complex, the composition of which varies with external and internal environmental conditions. It is composed of at least eIF4A, eIF4E and eIF4G. eIF4E is also known to interact with other partners. In terms of tissue distribution, enriched in the germline.

In terms of biological role, recognizes and binds the 7-methylguanosine-containing mRNA cap during an early step in the initiation of protein synthesis and facilitates ribosome binding by inducing the unwinding of the mRNAs secondary structures. All 5 eIF4E proteins bind monomethyl cap structures. Only ife-1, ife-2 and ife-5 bind trimethyl cap structures which result from trans-splicing. Translation of trimethyl cap structure mRNAs may be regulated by intracellular redox state; disulfide bonds change the width and depth of the cap-binding cavity determining selectivity to mRNA caps. The sequence is that of Eukaryotic translation initiation factor 4E-5 (ife-5) from Caenorhabditis elegans.